The sequence spans 582 residues: Cryptochrome DASH, chloroplastic/mitochondrial (582 aa).

Residues 1 to 49 (MLHFLSSSSPLNPQFLLLPRQSARLRVLLSIPVSAMSSSSSSSSRGALA) constitute a chloroplast and mitochondrion transit peptide. In terms of domain architecture, Photolyase/cryptochrome alpha/beta spans 84-234 (GVAIVWFRND…KLQLIWGATL (151 aa)). The tract at residues 560-582 (GHQKRDQQFNRQRRPGHMYRRQK) is disordered. Basic residues predominate over residues 570 to 582 (RQRRPGHMYRRQK).

Belongs to the DNA photolyase class-1 family. FAD is required as a cofactor. The cofactor is (6R)-5,10-methylene-5,6,7,8-tetrahydrofolate.

It localises to the plastid. The protein localises to the chloroplast. Its subcellular location is the mitochondrion. Its function is as follows. May have a photoreceptor function. Binds ss- and ds-DNA in a sequence non-specific manner, lacks photolyase activity. In Oryza sativa subsp. japonica (Rice), this protein is Cryptochrome DASH, chloroplastic/mitochondrial (CRYD).